Here is a 284-residue protein sequence, read N- to C-terminus: Gap junction beta-1 protein (284 aa).

Topologically, residues 1 to 22 (MNWTGLYTLLSGVNRHSTAIGR) are cytoplasmic. A helical membrane pass occupies residues 23–45 (VWLSVIFIFRIMVLVVAAESVWG). Residues 46–75 (DEKSSFICNTLQPGCNSVCYDHFFPISHVR) are Extracellular-facing. A helical membrane pass occupies residues 76–95 (LWSLQLILVSTPALLVAMHV). At 96–130 (AHQQHIEKKMLRLEGHGDPLHLEEVKRHKVHISGT) the chain is on the cytoplasmic side. Residues 131–153 (LWWTYVISVVFRLLFEAAFMYVF) form a helical membrane-spanning segment. Over 154-191 (YLLYPGYAMVRLVKCDAYPCPNTVDCFVSRPTEKTIFT) the chain is Extracellular. Residues 192-214 (VFMLAASGICIILNVAEVVYLIF) traverse the membrane as a helical segment. Residues 215–284 (RACARRAQRR…AEKSDRCSAC (70 aa)) lie on the Cytoplasmic side of the membrane. A phosphoserine mark is found at S233, S259, S267, and S278.

It belongs to the connexin family. Beta-type (group I) subfamily. In terms of assembly, a connexon is composed of a hexamer of connexins. Interacts with CNST.

The protein resides in the cell membrane. It localises to the cell junction. Its subcellular location is the gap junction. One gap junction consists of a cluster of closely packed pairs of transmembrane channels, the connexons, through which materials of low MW diffuse from one cell to a neighboring cell. This is Gap junction beta-1 protein (GJB1) from Bos taurus (Bovine).